The primary structure comprises 386 residues: Protein salvador homolog 1 (386 aa).

Phosphoserine is present on residues Ser-95 and Ser-137. 2 consecutive WW domains span residues 200 to 233 and 235 to 268; these read LPLP…HPLE and EGLP…HPCA. A Phosphothreonine modification is found at Thr-211. An SARAH domain is found at 322–369; sequence ILKWELFQLADLDTYQGMLKLLFMKELEQIVKLYEAYRQALLTELENR. Positions 345-374 form a coiled coil; it reads MKELEQIVKLYEAYRQALLTELENRKQRQQ.

Homodimer. Stabilized through interaction with STK3/MST2 or STK4/MST1. Interacts (via SARAH domain) with isoform 1 of NEK2. Interacts with ESR1 only in the presence of STK3/MST2. Interacts with WTIP and AJUBA. Phosphorylated by STK3/MST2 and STK4/MST1. Phosphorylation is not required for SAV1 stability and may increase the number of protein binding sites on the scaffold molecule. In terms of tissue distribution, ubiquitously expressed in adult tissues with the highest level found in testis.

Its subcellular location is the nucleus. It is found in the cytoplasm. Its function is as follows. Regulator of STK3/MST2 and STK4/MST1 in the Hippo signaling pathway which plays a pivotal role in organ size control and tumor suppression by restricting proliferation and promoting apoptosis. The core of this pathway is composed of a kinase cascade wherein STK3/MST2 and STK4/MST1, in complex with its regulatory protein SAV1, phosphorylates and activates LATS1/2 in complex with its regulatory protein MOB1, which in turn phosphorylates and inactivates YAP1 oncoprotein and WWTR1/TAZ. Phosphorylation of YAP1 by LATS1/2 inhibits its translocation into the nucleus to regulate cellular genes important for cell proliferation, cell death, and cell migration. SAV1 is required for STK3/MST2 and STK4/MST1 activation and promotes cell-cycle exit and terminal differentiation in developing epithelial tissues. Plays a role in centrosome disjunction by regulating the localization of NEK2 to centrosomes, and its ability to phosphorylate CROCC and CEP250. In conjunction with STK3/MST2, activates the transcriptional activity of ESR1 through the modulation of its phosphorylation. This chain is Protein salvador homolog 1 (Sav1), found in Mus musculus (Mouse).